A 345-amino-acid polypeptide reads, in one-letter code: Putative [LysW]-L-2-aminoadipate/[LysW]-L-glutamate phosphate reductase (345 aa).

Residue Ser-11 to Thr-14 coordinates NADP(+). Residues Thr-34–Arg-56 are disordered. The active site involves Cys-146. Asn-309 lines the NADP(+) pocket.

It belongs to the NAGSA dehydrogenase family. Type 1 subfamily. LysY sub-subfamily.

It is found in the cytoplasm. The enzyme catalyses [amino-group carrier protein]-C-terminal-N-(1-carboxy-5-oxopentan-1-yl)-L-glutamine + phosphate + NADP(+) = [amino-group carrier protein]-C-terminal-N-(1-carboxy-5-phosphooxy-5-oxopentan-1-yl)-L-glutamine + NADPH + H(+). The catalysed reaction is [amino-group carrier protein]-C-terminal-gamma-(L-glutamyl-5-semialdehyde)-L-glutamate + phosphate + NADP(+) = [amino-group carrier protein]-C-terminal-gamma-(5-phospho-L-glutamyl)-L-glutamate + NADPH + H(+). It participates in amino-acid biosynthesis; L-lysine biosynthesis via AAA pathway; L-lysine from L-alpha-aminoadipate (Thermus route): step 3/5. Its pathway is amino-acid biosynthesis; L-arginine biosynthesis. Involved in both the arginine and lysine biosynthetic pathways. The sequence is that of Putative [LysW]-L-2-aminoadipate/[LysW]-L-glutamate phosphate reductase from Haloarcula marismortui (strain ATCC 43049 / DSM 3752 / JCM 8966 / VKM B-1809) (Halobacterium marismortui).